A 128-amino-acid polypeptide reads, in one-letter code: MEELICTYPYHSNLFMFLFLFFCPSKRARRGHPKFLFTLCYKSNHLIPKLLPPSLFTKRVMLNPSSHPPSPDFPTGSSASPRVKLRPSTLWAPPLTVSSDFAASSSSTAPVTVTDKPVTPAVSKRYQP.

Disordered regions lie at residues 62–83 (LNPS…SPRV) and 101–128 (FAAS…RYQP). The span at 101 to 114 (FAASSSSTAPVTVT) shows a compositional bias: low complexity.

It localises to the cytoplasm. It is found in the nucleus. This is an uncharacterized protein from Saccharomyces cerevisiae (strain ATCC 204508 / S288c) (Baker's yeast).